Reading from the N-terminus, the 710-residue chain is Polyribonucleotide nucleotidyltransferase (710 aa).

Positions 489 and 495 each coordinate Mg(2+). In terms of domain architecture, KH spans 556 to 615 (PKIDTIKIDVDKIKVVIGKGGETIDKIIAETGVKIDIDDEGNVSIYSSDQAAINRTKEII). Residues 625–693 (GEVYHAKVVR…EKGRVDASMK (69 aa)) form the S1 motif domain. The segment at 691–710 (SMKALIPRPPKPEKKEEKHD) is disordered. Residues 700–710 (PKPEKKEEKHD) are compositionally biased toward basic and acidic residues.

The protein belongs to the polyribonucleotide nucleotidyltransferase family. Requires Mg(2+) as cofactor.

The protein resides in the cytoplasm. It catalyses the reaction RNA(n+1) + phosphate = RNA(n) + a ribonucleoside 5'-diphosphate. Functionally, involved in mRNA degradation. Catalyzes the phosphorolysis of single-stranded polyribonucleotides processively in the 3'- to 5'-direction. The chain is Polyribonucleotide nucleotidyltransferase from Streptococcus pyogenes serotype M2 (strain MGAS10270).